Here is a 291-residue protein sequence, read N- to C-terminus: tRNA U34 carboxymethyltransferase (291 aa).

Carboxy-S-adenosyl-L-methionine is bound by residues Lys61, Trp75, Lys80, Gly100, 122–124, Tyr169, and Arg284; that span reads DPS.

It belongs to the class I-like SAM-binding methyltransferase superfamily. CmoB family. Homotetramer.

The enzyme catalyses carboxy-S-adenosyl-L-methionine + 5-hydroxyuridine(34) in tRNA = 5-carboxymethoxyuridine(34) in tRNA + S-adenosyl-L-homocysteine + H(+). Catalyzes carboxymethyl transfer from carboxy-S-adenosyl-L-methionine (Cx-SAM) to 5-hydroxyuridine (ho5U) to form 5-carboxymethoxyuridine (cmo5U) at position 34 in tRNAs. The protein is tRNA U34 carboxymethyltransferase of Campylobacter lari (strain RM2100 / D67 / ATCC BAA-1060).